The chain runs to 551 residues: Hyaluronan synthase 2 (551 aa).

Residues 1 to 11 (MHCERFICILR) are Cytoplasmic-facing. The chain crosses the membrane as a helical span at residues 12 to 32 (IIGTTLFGVSLLLGISAAYIV). Topologically, residues 33 to 45 (GYQFIQTDNYYFS) are extracellular. Residues 46–66 (FGLYGAILALHLIIQSLFAFL) form a helical membrane-spanning segment. The Cytoplasmic segment spans residues 67–374 (EHRKMKRSLE…NSLWFHKHHL (308 aa)). The helical transmembrane segment at 375–395 (WMTYEAVITGFFPFFLIATVI) threads the bilayer. Residues 396–402 (QLFYRGR) lie on the Extracellular side of the membrane. The helical transmembrane segment at 403–423 (IWNILLFLLTVQLVGLIKSSF) threads the bilayer. Residues 424 to 429 (ASALRG) are Cytoplasmic-facing. The chain crosses the membrane as a helical span at residues 430–450 (NIVMVFMSFYSVLYMSSLLPA). Over 451–470 (KMFAIATINKAGWGTSGRKT) the chain is Extracellular. A helical transmembrane segment spans residues 471–491 (IVVNFIGLIPITVWFTILLGG). At 492–509 (VCYTIWRETKKPFSESEK) the chain is on the cytoplasmic side. The helical transmembrane segment at 510–530 (IVLAVGAILYACYWVMLLTMY) threads the bilayer. Residues 531–551 (VSLVMKCGRRRKEPQHDLVLA) lie on the Extracellular side of the membrane.

It belongs to the NodC/HAS family. Homodimer; dimerization promotes enzymatic activity. The cofactor is Mg(2+).

The protein localises to the cell membrane. The protein resides in the endoplasmic reticulum membrane. Its subcellular location is the vesicle. It is found in the golgi apparatus membrane. It localises to the lysosome. It catalyses the reaction [hyaluronan](n) + UDP-N-acetyl-alpha-D-glucosamine = N-acetyl-beta-D-glucosaminyl-(1-&gt;4)-[hyaluronan](n) + UDP + H(+). It carries out the reaction N-acetyl-beta-D-glucosaminyl-(1-&gt;4)-[hyaluronan](n) + UDP-alpha-D-glucuronate = [hyaluronan](n+1) + UDP + H(+). The protein operates within glycan biosynthesis; hyaluronan biosynthesis. Functionally, catalyzes the addition of GlcNAc or GlcUA monosaccharides to the nascent hyaluronan polymer. Therefore, it is essential to hyaluronan synthesis a major component of most extracellular matrices that has a structural role in tissues architectures and regulates cell adhesion, migration and differentiation. This is one of three isoenzymes responsible for cellular hyaluronan synthesis and it is particularly responsible for the synthesis of high molecular mass hyaluronan. In Xenopus laevis (African clawed frog), this protein is Hyaluronan synthase 2 (has2).